A 233-amino-acid chain; its full sequence is Ribitol-5-phosphate cytidylyltransferase (233 aa).

CTP contacts are provided by residues 7 to 10 and 80 to 86; these read LAGG and GADRNET.

Belongs to the IspD/TarI cytidylyltransferase family. TarI subfamily.

It carries out the reaction D-ribitol 5-phosphate + CTP + H(+) = CDP-L-ribitol + diphosphate. The protein operates within cell wall biogenesis; poly(ribitol phosphate) teichoic acid biosynthesis. Its function is as follows. Catalyzes the transfer of the cytidylyl group of CTP to D-ribitol 5-phosphate. This is Ribitol-5-phosphate cytidylyltransferase from Lactiplantibacillus plantarum (strain ATCC BAA-793 / NCIMB 8826 / WCFS1) (Lactobacillus plantarum).